Consider the following 103-residue polypeptide: ATP synthase subunit f, mitochondrial (103 aa).

A mitochondrion-targeting transit peptide spans 1–6 (MIFRRQ).

F-type ATP synthases have 2 components, the catalytic core F(1) and the membrane-embedded component F(0), linked together by a central stalk and a peripheral stalk. The central stalk, also called rotor shaft, is often seen as part of F(1). The peripheral stalk is seen as part of F(0). F(0) contains the membrane channel next to the rotor. F-type ATP synthases form dimers but each monomer functions independently in ATP generation. The dimer consists of 17 different polypeptides: ATP1 (subunit alpha, 3 molecules per monomer, part of F(1)), ATP2 (subunit beta, 3 copies per monomer, part of F(1)), ATP3 (subunit gamma, part of the central stalk), ATP4 (subunit b, part of the peripheral stalk), ATP5/OSCP (subunit 5/OSCP, part of the peripheral stalk), ATP6 (subunit a, part of the peripheral stalk), ATP7 (subunit d, part of the peripheral stalk), ATP8 (subunit 8, part of the peripheral stalk), OLI1 (subunit c, part of the rotor, 10 molecules per monomer), ATP14 (subunit h, part of the peripheral stalk), ATP15 (subunit epsilon, part of the central stalk), ATP16 (subunit delta, part of the central stalk), ATP17 (subunit f, part of the peripheral stalk), ATP18 (subunit i/j, part of the peripheral stalk), ATP19 (subunit k, dimer-specific, at interface between monomers), ATP20 (subunit g, at interface between monomers), TIM11 (subunit e, at interface between monomers).

It is found in the mitochondrion inner membrane. Mitochondrial membrane ATP synthase (F(1)F(0) ATP synthase or Complex V) produces ATP from ADP in the presence of a proton gradient across the membrane which is generated by electron transport complexes of the respiratory chain. F-type ATP synthases consist of two structural domains, F(1) - containing the extramembraneous catalytic core, and F(0) - containing the membrane proton channel, linked together by a central stalk and a peripheral stalk. During catalysis, ATP synthesis in the catalytic domain of F(1) is coupled via a rotary mechanism of the central stalk subunits to proton translocation. Part of the complex F(0) domain. Minor subunit located with subunit a/ATP6 in the membrane. The polypeptide is ATP synthase subunit f, mitochondrial (Yarrowia lipolytica (strain CLIB 122 / E 150) (Yeast)).